A 602-amino-acid chain; its full sequence is MATSSTPKYNSNSLENSVRRSPGDGINHEQNDEISRLPGETLITDKEVIYMCPFYGPVKGRIYVTNYKLYFKGEEMEPLITFAVPLGVIARIEKMGGASSRGENSYGLDITCKDMRNLRFALKQEVHSRKQIFEDLTKYAFPLSHGLLFFAFQNEEKFPENGWAVYDAMTEFRRQGLPNDQWRITFINRNYELCDTYPPLLVVPYSASEEDLKRVAAFRSRNRIPVLSWLHPENQSAIMRCSQPLVGMSGKRNKDDERYLDIIRETNGQTSKLTIYDARPNVNAVANKATGGGYENEDAYPNAELVFLDIHNIHVMRESLKKLKDIVYPNVEESHWLSSLESTHWLEHIKLVLTGAIQVADKVASGKSSVVVHCSDGWDRTAQLTSLAMLMLDSYYRTIVGFEVLVQKEWISFGHKFSSRIGHGDKNHADADRSPIFLQFIDCVWQMSKQFPTAFEFNEHFLITILDHLYSCRFGTFLYNCETIRDKEKVREKTPSLWSLISSEKSKYTNPFYTKELNRVLYPVASMRHLELWVNYYIRWNPRIRQQQPNPVEQRYMELLALRDDYVRRLEELQISNSPKINRSTTSPSSPSQMMPQVQTPF.

Residues 1–16 (MATSSTPKYNSNSLEN) are compositionally biased toward polar residues. The segment at 1-33 (MATSSTPKYNSNSLENSVRRSPGDGINHEQNDE) is disordered. Over residues 17–33 (SVRRSPGDGINHEQNDE) the composition is skewed to basic and acidic residues. One can recognise a GRAM domain in the interval 28–96 (HEQNDEISRL…GVIARIEKMG (69 aa)). Residues 162 to 537 (GWAVYDAMTE…RHLELWVNYY (376 aa)) enclose the Myotubularin phosphatase domain. 3 residues coordinate a 1,2-diacyl-sn-glycero-3-phospho-(1D-myo-inositol-3,5-bisphosphate): Asn-287, Asn-312, and Ile-313. A 1,2-diacyl-sn-glycero-3-phospho-(1D-myo-inositol-3-phosphate) contacts are provided by Asn-287, Asn-312, and Ile-313. The active-site Phosphocysteine intermediate is the Cys-374. Positions 375, 376, 377, 378, 379, 380, 416, and 420 each coordinate a 1,2-diacyl-sn-glycero-3-phospho-(1D-myo-inositol-3,5-bisphosphate). A 1,2-diacyl-sn-glycero-3-phospho-(1D-myo-inositol-3-phosphate)-binding residues include Ser-375, Asp-376, Gly-377, Trp-378, Asp-379, and Arg-380. Arg-420 provides a ligand contact to a 1,2-diacyl-sn-glycero-3-phospho-(1D-myo-inositol-3-phosphate). The segment at 577–602 (NSPKINRSTTSPSSPSQMMPQVQTPF) is disordered. The span at 584-602 (STTSPSSPSQMMPQVQTPF) shows a compositional bias: low complexity.

The protein belongs to the protein-tyrosine phosphatase family. Non-receptor class myotubularin subfamily.

Its subcellular location is the cytoplasm. The protein resides in the cell membrane. The protein localises to the cell projection. It is found in the filopodium. It localises to the ruffle. Its subcellular location is the late endosome. The protein resides in the myofibril. The protein localises to the sarcomere. The enzyme catalyses a 1,2-diacyl-sn-glycero-3-phospho-(1D-myo-inositol-3-phosphate) + H2O = a 1,2-diacyl-sn-glycero-3-phospho-(1D-myo-inositol) + phosphate. The catalysed reaction is a 1,2-diacyl-sn-glycero-3-phospho-(1D-myo-inositol-3,5-bisphosphate) + H2O = a 1,2-diacyl-sn-glycero-3-phospho-(1D-myo-inositol-5-phosphate) + phosphate. It catalyses the reaction 1,2-dioctanoyl-sn-glycero-3-phospho-(1-D-myo-inositol-3-phosphate) + H2O = 1,2-dioctanoyl-sn-glycero-3-phospho-(1D-myo-inositol) + phosphate. It carries out the reaction 1,2-dioctanoyl-sn-glycero-3-phospho-(1D-myo-inositol-3,5-bisphosphate) + H2O = 1,2-dioctanoyl-sn-glycero-3-phospho-(1D-myo-inositol-5-phosphate) + phosphate. The enzyme catalyses 1,2-dihexadecanoyl-sn-glycero-3-phospho-(1D-myo-inositol-3,5-phosphate) + H2O = 1,2-dihexadecanoyl-sn-glycero-3-phospho-(1D-myo-inositol-5-phosphate) + phosphate. Its function is as follows. Lipid phosphatase which dephosphorylates phosphatidylinositol 3-monophosphate (PI3P) and phosphatidylinositol 3,5-bisphosphate (PI(3,5)P2). This is Myotubularin (mtm1) from Xenopus laevis (African clawed frog).